Reading from the N-terminus, the 571-residue chain is Cyclic di-GMP phosphodiesterase TpdA (571 aa).

3 helical membrane-spanning segments follow: residues 155-175, 321-341, and 395-415; these read IAWVLLVTTAIFFSVCYYAIN, VYYISGPLKSIILLSLFFLVI, and TLISNGLLLIHTILVIRAIYA. The EAL domain maps to 344-571; the sequence is HRSLQAFITY…HQGYFYPLHF (228 aa).

Its subcellular location is the cell inner membrane. It carries out the reaction 3',3'-c-di-GMP + H2O = 5'-phosphoguanylyl(3'-&gt;5')guanosine + H(+). Functionally, cyclic di-GMP phosphodiesterase that plays an important role in modulating the global c-di-GMP pool. Its ability to alter the c-di-GMP pool has an effect on swimming motility, swarming motility and biofilm formation, multicellular behaviors that are important for the survival and dissemination of this environmental pathogen. Exhibits a dual function, namely, c-di-GMP degradation and modulation of its own expression. In Vibrio parahaemolyticus serotype O3:K6 (strain RIMD 2210633), this protein is Cyclic di-GMP phosphodiesterase TpdA.